The primary structure comprises 76 residues: Putative UPF0377 protein YGL260W (76 aa).

This sequence belongs to the UPF0377 family.

The polypeptide is Putative UPF0377 protein YGL260W (Saccharomyces cerevisiae (strain ATCC 204508 / S288c) (Baker's yeast)).